Consider the following 152-residue polypeptide: Deoxyuridine 5'-triphosphate nucleotidohydrolase (152 aa).

Residues 71 to 73, Asn-84, 88 to 90, and Lys-98 each bind substrate; these read RSG and LID.

The protein belongs to the dUTPase family. Mg(2+) is required as a cofactor.

It carries out the reaction dUTP + H2O = dUMP + diphosphate + H(+). The protein operates within pyrimidine metabolism; dUMP biosynthesis; dUMP from dCTP (dUTP route): step 2/2. Functionally, this enzyme is involved in nucleotide metabolism: it produces dUMP, the immediate precursor of thymidine nucleotides and it decreases the intracellular concentration of dUTP so that uracil cannot be incorporated into DNA. The protein is Deoxyuridine 5'-triphosphate nucleotidohydrolase of Legionella pneumophila subsp. pneumophila (strain Philadelphia 1 / ATCC 33152 / DSM 7513).